The chain runs to 446 residues: Tubulin beta-2 chain (446 aa).

GTP is bound by residues glutamine 11, glutamate 69, serine 138, glycine 142, threonine 143, glycine 144, asparagine 204, and asparagine 226. Residue glutamate 69 participates in Mg(2+) binding. A disordered region spans residues 424 to 446 (QYQEATADEEGEFDEDEEGGGDE). A compositionally biased stretch (acidic residues) spans 429–446 (TADEEGEFDEDEEGGGDE).

It belongs to the tubulin family. Dimer of alpha and beta chains. A typical microtubule is a hollow water-filled tube with an outer diameter of 25 nm and an inner diameter of 15 nM. Alpha-beta heterodimers associate head-to-tail to form protofilaments running lengthwise along the microtubule wall with the beta-tubulin subunit facing the microtubule plus end conferring a structural polarity. Microtubules usually have 13 protofilaments but different protofilament numbers can be found in some organisms and specialized cells. The cofactor is Mg(2+). As to expression, testis specific.

It localises to the cytoplasm. The protein resides in the cytoskeleton. Tubulin is the major constituent of microtubules, a cylinder consisting of laterally associated linear protofilaments composed of alpha- and beta-tubulin heterodimers. Microtubules grow by the addition of GTP-tubulin dimers to the microtubule end, where a stabilizing cap forms. Below the cap, tubulin dimers are in GDP-bound state, owing to GTPase activity of alpha-tubulin. The protein is Tubulin beta-2 chain (betaTub85D) of Drosophila melanogaster (Fruit fly).